A 267-amino-acid chain; its full sequence is Thiazole synthase (267 aa).

The Schiff-base intermediate with DXP role is filled by lysine 110. 1-deoxy-D-xylulose 5-phosphate contacts are provided by residues glycine 171, 197–198 (AG), and 219–220 (NT).

This sequence belongs to the ThiG family. As to quaternary structure, homotetramer. Forms heterodimers with either ThiH or ThiS.

Its subcellular location is the cytoplasm. It carries out the reaction [ThiS sulfur-carrier protein]-C-terminal-Gly-aminoethanethioate + 2-iminoacetate + 1-deoxy-D-xylulose 5-phosphate = [ThiS sulfur-carrier protein]-C-terminal Gly-Gly + 2-[(2R,5Z)-2-carboxy-4-methylthiazol-5(2H)-ylidene]ethyl phosphate + 2 H2O + H(+). It functions in the pathway cofactor biosynthesis; thiamine diphosphate biosynthesis. Functionally, catalyzes the rearrangement of 1-deoxy-D-xylulose 5-phosphate (DXP) to produce the thiazole phosphate moiety of thiamine. Sulfur is provided by the thiocarboxylate moiety of the carrier protein ThiS. In vitro, sulfur can be provided by H(2)S. This chain is Thiazole synthase, found in Maricaulis maris (strain MCS10) (Caulobacter maris).